The sequence spans 264 residues: Pyridoxine 5'-phosphate synthase (264 aa).

A compositionally biased stretch (polar residues) spans 1 to 21; sequence MTDTAQILPTTLEQNPQNTSK. The tract at residues 1-22 is disordered; it reads MTDTAQILPTTLEQNPQNTSKK. Asparagine 28 provides a ligand contact to 3-amino-2-oxopropyl phosphate. A 1-deoxy-D-xylulose 5-phosphate-binding site is contributed by 30–31; the sequence is DH. Arginine 39 lines the 3-amino-2-oxopropyl phosphate pocket. The active-site Proton acceptor is histidine 64. The 1-deoxy-D-xylulose 5-phosphate site is built by arginine 66 and histidine 71. The active-site Proton acceptor is glutamate 91. Threonine 121 is a 1-deoxy-D-xylulose 5-phosphate binding site. The Proton donor role is filled by histidine 217. 3-amino-2-oxopropyl phosphate contacts are provided by residues glycine 218 and 239–240; that span reads GH.

It belongs to the PNP synthase family. In terms of assembly, homooctamer; tetramer of dimers.

The protein resides in the cytoplasm. It catalyses the reaction 3-amino-2-oxopropyl phosphate + 1-deoxy-D-xylulose 5-phosphate = pyridoxine 5'-phosphate + phosphate + 2 H2O + H(+). It participates in cofactor biosynthesis; pyridoxine 5'-phosphate biosynthesis; pyridoxine 5'-phosphate from D-erythrose 4-phosphate: step 5/5. Its function is as follows. Catalyzes the complicated ring closure reaction between the two acyclic compounds 1-deoxy-D-xylulose-5-phosphate (DXP) and 3-amino-2-oxopropyl phosphate (1-amino-acetone-3-phosphate or AAP) to form pyridoxine 5'-phosphate (PNP) and inorganic phosphate. This Psychrobacter cryohalolentis (strain ATCC BAA-1226 / DSM 17306 / VKM B-2378 / K5) protein is Pyridoxine 5'-phosphate synthase.